We begin with the raw amino-acid sequence, 152 residues long: Large ribosomal subunit protein uL15 (152 aa).

Residues 1 to 56 are disordered; the sequence is MELNTLKPAKNSVKQNTRYGRGQGSGKGGTSTRGHKGAKSRSGYKSKPGFEGGQLP. Residues 21–31 show a composition bias toward gly residues; that stretch reads RGQGSGKGGTS. Over residues 33-44 the composition is skewed to basic residues; that stretch reads RGHKGAKSRSGY.

This sequence belongs to the universal ribosomal protein uL15 family. As to quaternary structure, part of the 50S ribosomal subunit.

Functionally, binds to the 23S rRNA. The polypeptide is Large ribosomal subunit protein uL15 (Amoebophilus asiaticus (strain 5a2)).